The sequence spans 288 residues: Nucleotide-binding protein Mlg_2233 (288 aa).

Position 11–18 (11–18 (GLSGSGKS)) interacts with ATP. A GTP-binding site is contributed by 63–66 (DARN).

This sequence belongs to the RapZ-like family.

Functionally, displays ATPase and GTPase activities. The protein is Nucleotide-binding protein Mlg_2233 of Alkalilimnicola ehrlichii (strain ATCC BAA-1101 / DSM 17681 / MLHE-1).